A 337-amino-acid chain; its full sequence is MDFILLIILSGVFLPDIISLQPIVGQEPGVTLSDEEQYYADEENNTDGNSVALHKLEENEMDTPANEKTGNYYKDIKQYVFTTPNIKGSEVSVTATTNLEFAVKKNYKASKPTASGEEEKPSESSRKTSTPNIPAFWTILSKAVNETAVSMDDKDQFFQPIPASDLNATNEDKLSELEEIKLKLMLGISLMTLVLLIPLLIFCFATLYKLRHLRDKSYESQYSINPELATLSYFHPTEGVSDTSFSKSADSNSYWVHNSSEMRRSRTRRSKSKPMDFSAGSNQTVLTDESSFLPPEETRFLLPEEPGKELIVERGPMQAMNEIDAQLLLNKEGSPSN.

The N-terminal stretch at 1–20 is a signal peptide; sequence MDFILLIILSGVFLPDIISL. Residues 21–183 are Lumenal-facing; that stretch reads QPIVGQEPGV…LSELEEIKLK (163 aa). The segment at 110-130 is disordered; the sequence is SKPTASGEEEKPSESSRKTST. Residues 117-126 show a composition bias toward basic and acidic residues; that stretch reads EEEKPSESSR. Residue Asn145 is glycosylated (N-linked (GlcNAc...) asparagine). A helical membrane pass occupies residues 184 to 204; that stretch reads LMLGISLMTLVLLIPLLIFCF. Over 205-337 the chain is Cytoplasmic; it reads ATLYKLRHLR…LLNKEGSPSN (133 aa). The segment at 259–283 is disordered; that stretch reads SSEMRRSRTRRSKSKPMDFSAGSNQ. Ser336 is subject to Phosphoserine.

As to quaternary structure, interacts with SNAP25. Post-translationally, highly N- and O-glycosylated; contains sialic acid. MN9 epitope is O-glycosylated. Sperm specific, including germ cells (at protein level).

The protein localises to the cytoplasmic vesicle. It localises to the secretory vesicle. The protein resides in the acrosome membrane. Its subcellular location is the acrosome inner membrane. It is found in the acrosome outer membrane. The protein localises to the nucleus. It localises to the cytoplasm. In terms of biological role, acrosomal membrane-anchored protein involved in the process of fertilization and in acrosome biogenesis. The chain is Equatorin (Eqtn) from Mus musculus (Mouse).